Reading from the N-terminus, the 55-residue chain is Large ribosomal subunit protein bL33B (55 aa).

This sequence belongs to the bacterial ribosomal protein bL33 family.

The polypeptide is Large ribosomal subunit protein bL33B (Mycobacteroides abscessus (strain ATCC 19977 / DSM 44196 / CCUG 20993 / CIP 104536 / JCM 13569 / NCTC 13031 / TMC 1543 / L948) (Mycobacterium abscessus)).